Reading from the N-terminus, the 238-residue chain is Thrombin-like enzyme gyroxin B2.1 (238 aa).

The Peptidase S1 domain occupies 1–229; that stretch reads VIGGDECNIN…HLDWIQNIIA (229 aa). Intrachain disulfides connect Cys-7–Cys-141, Cys-28–Cys-44, Cys-78–Cys-236, Cys-120–Cys-190, Cys-152–Cys-169, and Cys-180–Cys-205. His-43 serves as the catalytic Charge relay system. Asn-81 is a glycosylation site (N-linked (GlcNAc...) asparagine). Catalysis depends on Asp-88, which acts as the Charge relay system. Ser-184 functions as the Charge relay system in the catalytic mechanism.

Belongs to the peptidase S1 family. Snake venom subfamily. In terms of assembly, monomer. As to expression, expressed by the venom gland.

It localises to the secreted. Thrombin-like snake venom serine protease. Displays a specificity similar to trypsin. Releases only fibrinopeptide A in the conversion of fibrinogen (FGA) to fibrin. Shows coagulant, esterase and amidase activities. Reversibly increases the permeability of the blood brain barrier (BBB) in mice. Induces the barrel rotation syndrome in mice, which is manifested by gyroxin-like, rapid rolling motions. This syndrome may be due to its effect on BBB permeability, and certainly also to other actions affecting endogenous substrates present in the endothelium, nervous tissues or blood. The polypeptide is Thrombin-like enzyme gyroxin B2.1 (Crotalus durissus terrificus (South American rattlesnake)).